The chain runs to 901 residues: HTH-type transcriptional regulator MalT (901 aa).

Residue 39–46 (SPAGYGKT) coordinates ATP. The 66-residue stretch at 829–894 (ELIRTSPLTQ…DAVQHAQQLL (66 aa)) folds into the HTH luxR-type domain. Positions 853-872 (NEQIAGELAVAATTIKTHIR) form a DNA-binding region, H-T-H motif.

The protein belongs to the MalT family. Monomer in solution. Oligomerizes to an active state in the presence of the positive effectors ATP and maltotriose.

Its activity is regulated as follows. Activated by ATP and maltotriose, which are both required for DNA binding. Functionally, positively regulates the transcription of the maltose regulon whose gene products are responsible for uptake and catabolism of malto-oligosaccharides. Specifically binds to the promoter region of its target genes, recognizing a short DNA motif called the MalT box. This is HTH-type transcriptional regulator MalT from Salmonella agona (strain SL483).